A 1325-amino-acid chain; its full sequence is MLPVYQEVKPNPLQDANLCSRVFFWWLNPLFKIGHKRRLEEDDMYSVLPEDRSQHLGEELQGFWDKEVLRAENDAQKPSLTRAIIKCYWKSYLVLGIFTLIEESAKVIQPIFLGKIINYFENYDPMDSVALNTAYAYATVLTFCTLILAILHHLYFYHVQCAGMRLRVAMCHMIYRKALRLSNMAMGKTTTGQIVNLLSNDVNKFDQVTVFLHFLWAGPLQAIAVTALLWMEIGISCLAGMAVLIILLPLQSCFGKLFSSLRSKTATFTDARIRTMNEVITGIRIIKMYAWEKSFSNLITNLRKKEISKILRSSCLRGMNLASFFSASKIIVFVTFTTYVLLGSVITASRVFVAVTLYGAVRLTVTLFFPSAIERVSEAIVSIRRIQTFLLLDEISQRNRQLPSDGKKMVHVQDFTAFWDKASETPTLQGLSFTVRPGELLAVVGPVGAGKSSLLSAVLGELAPSHGLVSVHGRIAYVSQQPWVFSGTLRSNILFGKKYEKERYEKVIKACALKKDLQLLEDGDLTVIGDRGTTLSGGQKARVNLARAVYQDADIYLLDDPLSAVDAEVSRHLFELCICQILHEKITILVTHQLQYLKAASQILILKDGKMVQKGTYTEFLKSGIDFGSLLKKDNEESEQPPVPGTPTLRNRTFSESSVWSQQSSRPSLKDGALESQDTENVPVTLSEENRSEGKVGFQAYKNYFRAGAHWIVFIFLILLNTAAQVAYVLQDWWLSYWANKQSMLNVTVNGGGNVTEKLDLNWYLGIYSGLTVATVLFGIARSLLVFYVLVNSSQTLHNKMFESILKAPVLFFDRNPIGRILNRFSKDIGHLDDLLPLTFLDFIQTLLQVVGVVSVAVAVIPWIAIPLVPLGIIFIFLRRYFLETSRDVKRLESTTRSPVFSHLSSSLQGLWTIRAYKAEERCQELFDAHQDLHSEAWFLFLTTSRWFAVRLDAICAMFVIIVAFGSLILAKTLDAGQVGLALSYALTLMGMFQWCVRQSAEVENMMISVERVIEYTDLEKEAPWEYQKRPPPAWPHEGVIIFDNVNFMYSPGGPLVLKHLTALIKSQEKVGIVGRTGAGKSSLISALFRLSEPEGKIWIDKILTTEIGLHDLRKKMSIIPQEPVLFTGTMRKNLDPFNEHTDEELWNALQEVQLKETIEDLPGKMDTELAESGSNFSVGQRQLVCLARAILRKNQILIIDEATANVDPRTDELIQKKIREKFAHCTVLTIAHRLNTIIDSDKIMVLDSGRLKEYDEPYVLLQNKESLFYKMVQQLGKAEAAALTETAKQVYFKRNYPHIGHTDHMVTNTSNGQPSTLTIFETAL.

Residues 92-377 form the ABC transmembrane type-1 1 domain; it reads YLVLGIFTLI…FFPSAIERVS (286 aa). 7 helical membrane-spanning segments follow: residues 93 to 113, 136 to 156, 207 to 227, 228 to 248, 328 to 348, 351 to 371, and 440 to 460; these read LVLGIFTLIEESAKVIQPIFL, AYATVLTFCTLILAILHHLYF, QVTVFLHFLWAGPLQAIAVTA, LLWMEIGISCLAGMAVLIILL, SKIIVFVTFTTYVLLGSVITA, VFVAVTLYGAVRLTVTLFFPS, and LLAVVGPVGAGKSSLLSAVLG. The ABC transporter 1 domain occupies 410–633; the sequence is VHVQDFTAFW…GIDFGSLLKK (224 aa). 445–452 is an ATP binding site; it reads GPVGAGKS. Thr646 and Thr648 each carry phosphothreonine. Residues 657–667 are compositionally biased toward low complexity; the sequence is SSVWSQQSSRP. The interval 657–688 is disordered; sequence SSVWSQQSSRPSLKDGALESQDTENVPVTLSE. Phosphoserine is present on residues Ser664 and Ser668. The helical transmembrane segment at 710–730 threads the bilayer; the sequence is HWIVFIFLILLNTAAQVAYVL. The 292-residue stretch at 714–1005 folds into the ABC transmembrane type-1 2 domain; that stretch reads FIFLILLNTA…CVRQSAEVEN (292 aa). N-linked (GlcNAc...) asparagine glycans are attached at residues Asn746 and Asn754. 6 helical membrane-spanning segments follow: residues 771-791, 836-856, 858-878, 954-974, 977-997, and 1038-1058; these read LTVATVLFGIARSLLVFYVLV, LPLTFLDFIQTLLQVVGVVSV, VAVIPWIAIPLVPLGIIFIFL, AICAMFVIIVAFGSLILAKTL, GQVGLALSYALTLMGMFQWCV, and EGVIIFDNVNFMYSPGGPLVL. In terms of domain architecture, ABC transporter 2 spans 1041–1274; the sequence is IIFDNVNFMY…KESLFYKMVQ (234 aa). An ATP-binding site is contributed by 1075-1082; sequence GRTGAGKS. The PDZ-binding signature appears at 1322–1325; it reads ETAL.

The protein belongs to the ABC transporter superfamily. ABCC family. Conjugate transporter (TC 3.A.1.208) subfamily. Interacts (via PDZ-binding motif) with SNX27 (via PDZ domain); this interaction accelerates MRP4 internalization. Mg(2+) is required as a cofactor. In terms of processing, N-glycosylated; leading to substrate-selective effects on its transport activity. In terms of tissue distribution, widely expressed, with particularly high levels in prostate, but is barely detectable in liver. sinusoidal membrane of hepatocytes.

The protein localises to the basolateral cell membrane. Its subcellular location is the apical cell membrane. The enzyme catalyses ATP + H2O + xenobioticSide 1 = ADP + phosphate + xenobioticSide 2.. It catalyses the reaction an S-substituted glutathione(in) + ATP + H2O = an S-substituted glutathione(out) + ADP + phosphate + H(+). It carries out the reaction 17beta-estradiol 17-O-(beta-D-glucuronate)(in) + ATP + H2O = 17beta-estradiol 17-O-(beta-D-glucuronate)(out) + ADP + phosphate + H(+). The catalysed reaction is dehydroepiandrosterone 3-sulfate(in) + ATP + H2O = dehydroepiandrosterone 3-sulfate(out) + ADP + phosphate + H(+). The enzyme catalyses leukotriene C4(in) + ATP + H2O = leukotriene C4(out) + ADP + phosphate + H(+). It catalyses the reaction leukotriene B4(in) + ATP + H2O = leukotriene B4(out) + ADP + phosphate + H(+). It carries out the reaction urate(in) + ATP + H2O = urate(out) + ADP + phosphate + H(+). The catalysed reaction is 3',5'-cyclic GMP(in) + ATP + H2O = 3',5'-cyclic GMP(out) + ADP + phosphate + H(+). The enzyme catalyses 3',5'-cyclic AMP(in) + ATP + H2O = 3',5'-cyclic AMP(out) + ADP + phosphate + H(+). It catalyses the reaction prostaglandin E2(in) + ATP + H2O = prostaglandin E2(out) + ADP + phosphate + H(+). It carries out the reaction prostaglandin E1(in) + ATP + H2O = prostaglandin E1(out) + ADP + phosphate + H(+). The catalysed reaction is glycodeoxycholate(in) + glutathione(in) + ATP + H2O = glycodeoxycholate(out) + glutathione(out) + ADP + phosphate + H(+). The enzyme catalyses cholate(in) + glutathione(in) + ATP + H2O = cholate(out) + glutathione(out) + ADP + phosphate + H(+). It catalyses the reaction glycocholate(in) + glutathione(in) + ATP + H2O = glycocholate(out) + glutathione(out) + ADP + phosphate + H(+). It carries out the reaction taurocholate(in) + glutathione(in) + ATP + H2O = taurocholate(out) + glutathione(out) + ADP + phosphate + H(+). The catalysed reaction is glycochenodeoxycholate(in) + glutathione(in) + ATP + H2O = glycochenodeoxycholate(out) + glutathione(out) + ADP + phosphate + H(+). The enzyme catalyses taurochenodeoxycholate(in) + glutathione(in) + ATP + H2O = taurochenodeoxycholate(out) + glutathione(out) + ADP + phosphate + H(+). It catalyses the reaction glycoursodeoxycholate(in) + glutathione(in) + ATP + H2O = glycoursodeoxycholate(out) + glutathione(out) + ADP + phosphate + H(+). It carries out the reaction tauroursodeoxycholate(in) + glutathione(in) + ATP + H2O = tauroursodeoxycholate(out) + glutathione(out) + ADP + phosphate + H(+). Its activity is regulated as follows. GSH stimulates the transport of MRP4. Urate inhibits methotrexate transport but stimulates cGMP transport. Nonsteroidal anti-inflammatory drugs (NSAIDs) strongly suppress the transport of MRP4 substrates. ATP-dependent transporter of the ATP-binding cassette (ABC) family that actively extrudes physiological compounds and xenobiotics from cells. Transports a range of endogenous molecules that have a key role in cellular communication and signaling, including cyclic nucleotides such as cyclic AMP (cAMP) and cyclic GMP (cGMP), bile acids, steroid conjugates, urate, and prostaglandins. Mediates the ATP-dependent efflux of glutathione conjugates such as leukotriene C4 (LTC4) and leukotriene B4 (LTB4) too. The presence of GSH is necessary for the ATP-dependent transport of LTB4, whereas GSH is not required for the transport of LTC4. Mediates the cotransport of bile acids with reduced glutathione (GSH). Transports a wide range of drugs and their metabolites, including anticancer, antiviral and antibiotics molecules. Confers resistance to anticancer agents such as methotrexate. The sequence is that of ATP-binding cassette sub-family C member 4 (ABCC4) from Homo sapiens (Human).